We begin with the raw amino-acid sequence, 308 residues long: Ribosomal RNA small subunit methyltransferase H (308 aa).

S-adenosyl-L-methionine is bound by residues 32–34 (GGH), Asp-51, Phe-78, Asp-99, and Gln-106.

The protein belongs to the methyltransferase superfamily. RsmH family.

The protein localises to the cytoplasm. The enzyme catalyses cytidine(1402) in 16S rRNA + S-adenosyl-L-methionine = N(4)-methylcytidine(1402) in 16S rRNA + S-adenosyl-L-homocysteine + H(+). Specifically methylates the N4 position of cytidine in position 1402 (C1402) of 16S rRNA. The polypeptide is Ribosomal RNA small subunit methyltransferase H (Campylobacter curvus (strain 525.92)).